The chain runs to 271 residues: Phosphatidylglycerol--prolipoprotein diacylglyceryl transferase (271 aa).

The next 4 membrane-spanning stretches (helical) occupy residues 18–38 (LSVH…LWMA), 51–71 (IFID…RAYY), 89–109 (IWKG…TGIV), and 115–135 (GISF…GQAI). Arg-137 is a binding site for a 1,2-diacyl-sn-glycero-3-phospho-(1'-sn-glycerol). Transmembrane regions (helical) follow at residues 177 to 197 (HPTF…LLLL), 205 to 225 (GNLF…IEGM), and 236 to 256 (LRIA…LMIF).

The protein belongs to the Lgt family.

It localises to the cell membrane. It catalyses the reaction L-cysteinyl-[prolipoprotein] + a 1,2-diacyl-sn-glycero-3-phospho-(1'-sn-glycerol) = an S-1,2-diacyl-sn-glyceryl-L-cysteinyl-[prolipoprotein] + sn-glycerol 1-phosphate + H(+). It participates in protein modification; lipoprotein biosynthesis (diacylglyceryl transfer). Functionally, catalyzes the transfer of the diacylglyceryl group from phosphatidylglycerol to the sulfhydryl group of the N-terminal cysteine of a prolipoprotein, the first step in the formation of mature lipoproteins. The protein is Phosphatidylglycerol--prolipoprotein diacylglyceryl transferase of Bacillus velezensis (strain DSM 23117 / BGSC 10A6 / LMG 26770 / FZB42) (Bacillus amyloliquefaciens subsp. plantarum).